We begin with the raw amino-acid sequence, 268 residues long: uncharacterized protein (268 aa).

An HTH iclR-type domain is found at Asn-15–Ile-77. The H-T-H motif DNA-binding region spans Leu-37–Gln-56. One can recognise an IclR-ED domain in the interval Ile-92–Tyr-265.

This is an uncharacterized protein from Haemophilus influenzae (strain ATCC 51907 / DSM 11121 / KW20 / Rd).